The sequence spans 179 residues: UPF0302 protein BLi02393/BL02764 (179 aa).

The protein belongs to the UPF0302 family.

The sequence is that of UPF0302 protein BLi02393/BL02764 from Bacillus licheniformis (strain ATCC 14580 / DSM 13 / JCM 2505 / CCUG 7422 / NBRC 12200 / NCIMB 9375 / NCTC 10341 / NRRL NRS-1264 / Gibson 46).